The primary structure comprises 374 residues: Probable neutral protease 2 homolog TRV_05367 (374 aa).

A signal peptide spans 1-19 (MQVIVALAALGSLAAPALG). A propeptide spanning residues 20-189 (FSIPRGVPVS…RGPLTRINKR (170 aa)) is cleaved from the precursor. 2 disulfide bridges follow: Cys197-Cys267 and Cys274-Cys292. His317 contributes to the Zn(2+) binding site. Glu318 is a catalytic residue. Residues His321 and Asp332 each contribute to the Zn(2+) site.

This sequence belongs to the peptidase M35 family. Requires Zn(2+) as cofactor.

The protein localises to the secreted. The catalysed reaction is Preferential cleavage of bonds with hydrophobic residues in P1'. Also 3-Asn-|-Gln-4 and 8-Gly-|-Ser-9 bonds in insulin B chain.. Probable secreted metalloprotease that shows high activities on basic nuclear substrates such as histone and protamine. May be involved in virulence. This is Probable neutral protease 2 homolog TRV_05367 from Trichophyton verrucosum (strain HKI 0517).